The chain runs to 265 residues: Isoprenyl transferase (265 aa).

Asp35 is an active-site residue. Asp35 provides a ligand contact to Mg(2+). Residues 36-39 (GNGR), Trp40, Arg48, His52, and 80-82 (SIE) contribute to the substrate site. Residue Asn83 is the Proton acceptor of the active site. Residues Trp84, Arg86, Arg203, and 209-211 (RIS) each bind substrate. Glu222 serves as a coordination point for Mg(2+).

This sequence belongs to the UPP synthase family. As to quaternary structure, homodimer. Mg(2+) serves as cofactor.

Its function is as follows. Catalyzes the condensation of isopentenyl diphosphate (IPP) with allylic pyrophosphates generating different type of terpenoids. The polypeptide is Isoprenyl transferase (Chlorobaculum tepidum (strain ATCC 49652 / DSM 12025 / NBRC 103806 / TLS) (Chlorobium tepidum)).